The sequence spans 418 residues: Tyrosine--tRNA ligase (418 aa).

The 'HIGH' region signature appears at 42-51 (PTAPDLHLGH). The short motif at 226–230 (KMSKS) is the 'KMSKS' region element. Lys-229 lines the ATP pocket. An S4 RNA-binding domain is found at 339-400 (VRLVALLTKS…GKRNFAKVRL (62 aa)).

It belongs to the class-I aminoacyl-tRNA synthetase family. TyrS type 2 subfamily. As to quaternary structure, homodimer.

Its subcellular location is the cytoplasm. It carries out the reaction tRNA(Tyr) + L-tyrosine + ATP = L-tyrosyl-tRNA(Tyr) + AMP + diphosphate + H(+). In terms of biological role, catalyzes the attachment of tyrosine to tRNA(Tyr) in a two-step reaction: tyrosine is first activated by ATP to form Tyr-AMP and then transferred to the acceptor end of tRNA(Tyr). The polypeptide is Tyrosine--tRNA ligase (Xylella fastidiosa (strain 9a5c)).